The chain runs to 95 residues: uncharacterized protein (95 aa).

This is an uncharacterized protein from Escherichia coli O6:H1 (strain CFT073 / ATCC 700928 / UPEC).